A 280-amino-acid polypeptide reads, in one-letter code: Inhibitor of growth protein 2 (280 aa).

Residues 48 to 120 (VLRELDNKYQ…VENRARQMEL (73 aa)) are a coiled coil. A disordered region spans residues 122 to 204 (SQCFQDPAES…KQEREASPVE (83 aa)). The span at 130-140 (ESERASDKAKM) shows a compositional bias: basic and acidic residues. Over residues 181-193 (KKSKSAKKKKRSK) the composition is skewed to basic residues. Lysine 195 participates in a covalent cross-link: Glycyl lysine isopeptide (Lys-Gly) (interchain with G-Cter in SUMO1). The PHD-type zinc finger occupies 212-261 (PTYCLCNQVSYGEMIGCDNEQCPIEWFHFSCVSLTYKPKGKWYCPKCRGD). Positions 215, 217, 228, 233, 239, 242, 255, and 258 each coordinate Zn(2+). Over residues 258 to 274 (CRGDNEKTMDKSTEKTK) the composition is skewed to basic and acidic residues. The tract at residues 258–280 (CRGDNEKTMDKSTEKTKKDRRSR) is disordered. The interval 264 to 280 (KTMDKSTEKTKKDRRSR) is PBR.

This sequence belongs to the ING family. In terms of assembly, interacts with H3K4me3 and to a lesser extent with H3K4me2. Component of a mSin3A-like complex at least consisting of SIN3A, HDAC1, HDAC2, RBBP4/RbAp48, RBBP7/RbAp46, SAP30 and ING2. In terms of processing, sumoylation enhances its association with SIN3A and is required for binding to some target gene promoters, this is the case for TMEM71. In terms of tissue distribution, widely expressed. Higher expressed in colon-cancer tumor than in normal colon tissues.

The protein resides in the nucleus. Seems to be involved in p53/TP53 activation and p53/TP53-dependent apoptotic pathways, probably by enhancing acetylation of p53/TP53. Component of a mSin3A-like corepressor complex, which is probably involved in deacetylation of nucleosomal histones. ING2 activity seems to be modulated by binding to phosphoinositides (PtdInsPs). The sequence is that of Inhibitor of growth protein 2 (ING2) from Homo sapiens (Human).